Reading from the N-terminus, the 551-residue chain is CTP synthase (551 aa).

The amidoligase domain stretch occupies residues 1-273 (MKNTTNTKRT…DSKILELLNI (273 aa)). Ser21 serves as a coordination point for CTP. Ser21 is a binding site for UTP. Residues 22–27 (SLGKGL) and Asp79 each bind ATP. Asp79 and Glu147 together coordinate Mg(2+). CTP-binding positions include 154 to 156 (DIE), 194 to 199 (KTKPTQ), and Lys230. Residues 194 to 199 (KTKPTQ) and Lys230 contribute to the UTP site. Positions 298 to 551 (TIAITGKYVD…ISAAVANKKG (254 aa)) constitute a Glutamine amidotransferase type-1 domain. Gly360 contacts L-glutamine. Cys387 (nucleophile; for glutamine hydrolysis) is an active-site residue. Residues 388-391 (LGMQ), Glu411, and Arg479 each bind L-glutamine. Active-site residues include His524 and Glu526.

This sequence belongs to the CTP synthase family. As to quaternary structure, homotetramer.

The catalysed reaction is UTP + L-glutamine + ATP + H2O = CTP + L-glutamate + ADP + phosphate + 2 H(+). It catalyses the reaction L-glutamine + H2O = L-glutamate + NH4(+). It carries out the reaction UTP + NH4(+) + ATP = CTP + ADP + phosphate + 2 H(+). It participates in pyrimidine metabolism; CTP biosynthesis via de novo pathway; CTP from UDP: step 2/2. Allosterically activated by GTP, when glutamine is the substrate; GTP has no effect on the reaction when ammonia is the substrate. The allosteric effector GTP functions by stabilizing the protein conformation that binds the tetrahedral intermediate(s) formed during glutamine hydrolysis. Inhibited by the product CTP, via allosteric rather than competitive inhibition. Catalyzes the ATP-dependent amination of UTP to CTP with either L-glutamine or ammonia as the source of nitrogen. Regulates intracellular CTP levels through interactions with the four ribonucleotide triphosphates. The polypeptide is CTP synthase (Desulfotalea psychrophila (strain LSv54 / DSM 12343)).